Here is a 274-residue protein sequence, read N- to C-terminus: Ethanolamine ammonia-lyase small subunit (274 aa).

Positions 161, 182, and 211 each coordinate adenosylcob(III)alamin.

This sequence belongs to the EutC family. The basic unit is a heterodimer which dimerizes to form tetramers. The heterotetramers trimerize; 6 large subunits form a core ring with 6 small subunits projecting outwards. Requires adenosylcob(III)alamin as cofactor.

Its subcellular location is the bacterial microcompartment. The catalysed reaction is ethanolamine = acetaldehyde + NH4(+). The protein operates within amine and polyamine degradation; ethanolamine degradation. Functionally, catalyzes the deamination of various vicinal amino-alcohols to oxo compounds. Allows this organism to utilize ethanolamine as the sole source of nitrogen and carbon in the presence of external vitamin B12. This Pseudomonas fluorescens (strain ATCC BAA-477 / NRRL B-23932 / Pf-5) protein is Ethanolamine ammonia-lyase small subunit.